We begin with the raw amino-acid sequence, 377 residues long: Peroxisomal membrane protein PEX14 (377 aa).

Residues 1-15 (MASSEQAEQPSQPSS) show a composition bias toward low complexity. The tract at residues 1-24 (MASSEQAEQPSQPSSTPGSENVLP) is disordered. An N-acetylalanine modification is found at Ala-2. Residues 2 to 108 (ASSEQAEQPS…YSPAGSRWRD (107 aa)) are Peroxisomal matrix-facing. Lys-34 is modified (N6-acetyllysine). The chain crosses the membrane as a helical span at residues 109 to 126 (YGALAIIMAGIAFGFHQL). Over 127–377 (YKKYLLPLIL…EGASNESERD (251 aa)) the chain is Cytoplasmic. The tract at residues 230 to 377 (PPSPSAPKIP…EGASNESERD (148 aa)) is disordered. Position 232 is a phosphoserine (Ser-232). 2 stretches are compositionally biased toward low complexity: residues 244-259 (PVKS…VNHH) and 265-275 (SPVSNESTSSS). A phosphoserine mark is found at Ser-282 and Ser-335. Acidic residues predominate over residues 323-342 (KEDEEDEEDDDVSHVDEEDC). Basic and acidic residues predominate over residues 360–377 (QVEKLRRPEGASNESERD).

This sequence belongs to the peroxin-14 family. In terms of assembly, interacts with PEX13; forming the PEX13-PEX14 docking complex. Interacts with PEX5 (via WxxxF/Y motifs). Interacts with PEX19. Interacts with tubulin.

Its subcellular location is the peroxisome membrane. Functionally, component of the PEX13-PEX14 docking complex, a translocon channel that specifically mediates the import of peroxisomal cargo proteins bound to PEX5 receptor. The PEX13-PEX14 docking complex forms a large import pore which can be opened to a diameter of about 9 nm. Mechanistically, PEX5 receptor along with cargo proteins associates with the PEX14 subunit of the PEX13-PEX14 docking complex in the cytosol, leading to the insertion of the receptor into the organelle membrane with the concomitant translocation of the cargo into the peroxisome matrix. Plays a key role for peroxisome movement through a direct interaction with tubulin. The polypeptide is Peroxisomal membrane protein PEX14 (Homo sapiens (Human)).